We begin with the raw amino-acid sequence, 304 residues long: Ornithine carbamoyltransferase (304 aa).

Carbamoyl phosphate contacts are provided by residues 53-56, Gln-80, Arg-104, and 131-134; these read STRT and HPCQ. Residues Asn-162, Asp-219, and 223–224 each bind L-ornithine; that span reads SM. Residues 259–260 and Arg-287 contribute to the carbamoyl phosphate site; that span reads CL.

This sequence belongs to the aspartate/ornithine carbamoyltransferase superfamily. OTCase family.

It localises to the cytoplasm. The catalysed reaction is carbamoyl phosphate + L-ornithine = L-citrulline + phosphate + H(+). It functions in the pathway amino-acid biosynthesis; L-arginine biosynthesis; L-arginine from L-ornithine and carbamoyl phosphate: step 1/3. Reversibly catalyzes the transfer of the carbamoyl group from carbamoyl phosphate (CP) to the N(epsilon) atom of ornithine (ORN) to produce L-citrulline. The protein is Ornithine carbamoyltransferase of Herminiimonas arsenicoxydans.